A 683-amino-acid chain; its full sequence is Outer dynein arm-docking complex subunit 4 (683 aa).

4 TPR repeats span residues 13 to 46 (FPSY…QSGD), 47 to 80 (KNCL…DPTF), 48 to 80 (NCLV…DPTF), and 81 to 114 (CKGI…RPDR). The tract at residues 158 to 179 (QQKPHPVRQLIHHPKRESKRKG) is disordered. A compositionally biased stretch (basic residues) spans 167-179 (LIHHPKRESKRKG). 5 TPR repeats span residues 275–311 (LKSL…NKEE), 320–353 (GNLY…AKEY), 360–393 (SRAL…AKTT), 397–430 (TWLF…AEEE), and 437–470 (LNAS…AKLV). Disordered stretches follow at residues 510-537 (ENAT…PEKV) and 553-683 (VLSK…EPIE). Composition is skewed to basic and acidic residues over residues 521–537 (TAKE…PEKV), 566–590 (PEQR…ERGP), 602–620 (GRTE…RPSE), and 629–675 (SSPR…IEKD). The stretch at 592–625 (DTAKGQFGEAGRTEQNREETREIYRRPSELDQNL) is one TPR 15 repeat.

Component of the outer dynein arm-docking complex along with ODAD1, ODAD2 and ODAD3. Interacts with ODAD1; this interaction may facilitate the recruitment and/or attachment of outer dynein arm docking complex proteins, including ODAD1, ODAD3 and ODAD2, to ciliary axonemes. Interacts with components of the IFT complex A, including IFT140, TTC21B/IFT139 and WDR19/IFT144, and the IFT complex B, including IFT46, IFT52 and IFT57. Interacts with CFAP53. Expressed in trachea multiciliated cells.

Its subcellular location is the cytoplasm. It is found in the cytoskeleton. The protein localises to the cilium axoneme. Functionally, component of the outer dynein arm-docking complex (ODA-DC) that mediates outer dynein arms (ODA) binding onto the doublet microtubule. Plays an essential role for the assembly of ODA-DC and for the docking of ODA in ciliary axoneme. The protein is Outer dynein arm-docking complex subunit 4 of Bos taurus (Bovine).